We begin with the raw amino-acid sequence, 329 residues long: Replication factor C small subunit (329 aa).

ATP is bound at residue 51–58 (GPPGTGKT).

This sequence belongs to the activator 1 small subunits family. RfcS subfamily. In terms of assembly, heteromultimer composed of small subunits (RfcS) and large subunits (RfcL).

Functionally, part of the RFC clamp loader complex which loads the PCNA sliding clamp onto DNA. This Staphylothermus marinus (strain ATCC 43588 / DSM 3639 / JCM 9404 / F1) protein is Replication factor C small subunit.